Consider the following 402-residue polypeptide: MATQASVEWIFNVAGSAASSSLDKAIKDAGGSENFSKYVITKFYDNYKDCIDDSGVYNACIGRAKTIDKALNDPKVAERNEEWYTNVATISRLDLELAELKLMLSNLGIKREERVLNSMFSVVREKGRSSNVIMMKQNAVKMIEEGKLKIKVERNETYTESLKNKIEELECIIDAFEKGKDITIDLDAMNGEVKLDGNSCSYNSTAALVSTILGTPIKMYNESGQPLFDVGNYMNPKNIIEKMIELEIPIFKSDYRNNESPDFDSWNERSNLKIVSVNDCHAICIFKFENNWWCFDDGRLKKHNGAGYPLIVANSKFQIDKILISGDIELNPGPDILVTLNDYITKYQLKLECTFDIFLEDDGSITYTCYMKLESAEAIGSGRSKKEAKRIAAYDILDQLGI.

The region spanning 334-402 (PDILVTLNDY…AYDILDQLGI (69 aa)) is the DRBM domain.

The protein belongs to the rotavirus NSP3 family.

The protein localises to the host cytoplasm. In terms of biological role, may play a role in stimulating the translation of viral mRNAs. This is Non-structural protein 3 from Rotavirus C (isolate RVC/Human/United Kingdom/Bristol/1989) (RV-C).